Reading from the N-terminus, the 56-residue chain is Large ribosomal subunit protein bL32 (56 aa).

Residues 1–16 (MAVQKSKKSRARRGMR) show a composition bias toward basic residues. Residues 1 to 56 (MAVQKSKKSRARRGMRRSHDAISGPSLTVDQTSGETHRRHHVTADGYYKGVQVISK) form a disordered region. Over residues 25 to 34 (PSLTVDQTSG) the composition is skewed to polar residues.

The protein belongs to the bacterial ribosomal protein bL32 family.

The protein is Large ribosomal subunit protein bL32 of Pseudoalteromonas translucida (strain TAC 125).